Here is a 156-residue protein sequence, read N- to C-terminus: RNA polymerase sigma factor SigS (156 aa).

Positions 29–44 (EYYQLLLIKMWQLSQI) match the Polymerase core binding motif. Residues 126–145 (QFEIAEIMSLSLSTIKLIKM) constitute a DNA-binding region (H-T-H motif).

This sequence belongs to the sigma-70 factor family.

Sigma factors are initiation factors that promote the attachment of RNA polymerase to specific initiation sites and are then released. Sigma-S contributes to the protection against external stress, thus playing a role in cellular fitness and survival. This chain is RNA polymerase sigma factor SigS (sigS), found in Staphylococcus aureus (strain COL).